Reading from the N-terminus, the 800-residue chain is Phenylalanine--tRNA ligase beta subunit (800 aa).

The 110-residue stretch at 38–147 (GAELKGVVAA…PGTVPGTPIG (110 aa)) folds into the tRNA-binding domain. The 77-residue stretch at 401–477 (VASPEVRMRW…RTLGYDAIPE (77 aa)) folds into the B5 domain. Mg(2+)-binding residues include aspartate 455, aspartate 461, glutamate 464, and glutamate 465. The 92-residue stretch at 708 to 799 (PRLPAVLRDV…LRERVGAELR (92 aa)) folds into the FDX-ACB domain.

This sequence belongs to the phenylalanyl-tRNA synthetase beta subunit family. Type 1 subfamily. Tetramer of two alpha and two beta subunits. Mg(2+) serves as cofactor.

Its subcellular location is the cytoplasm. The enzyme catalyses tRNA(Phe) + L-phenylalanine + ATP = L-phenylalanyl-tRNA(Phe) + AMP + diphosphate + H(+). This is Phenylalanine--tRNA ligase beta subunit from Anaeromyxobacter dehalogenans (strain 2CP-C).